Consider the following 136-residue polypeptide: MNSQIKNKAVYWGTGRRKTSVARVRLIPGNGQIKINGRSGDDYLNFNPLHLNSIKAPLQTLGLENSYDILVNVFGGGLTGQADAIKQGAARALCELSPDNRKPLKTEGHLSRDPRAKERRKYGLKKARKAPQFSKR.

The interval 97–136 (SPDNRKPLKTEGHLSRDPRAKERRKYGLKKARKAPQFSKR) is disordered. Positions 98 to 116 (PDNRKPLKTEGHLSRDPRA) are enriched in basic and acidic residues. Positions 117 to 136 (KERRKYGLKKARKAPQFSKR) are enriched in basic residues.

Belongs to the universal ribosomal protein uS9 family.

In Prochlorococcus marinus (strain MIT 9312), this protein is Small ribosomal subunit protein uS9.